The primary structure comprises 364 residues: Fructose-bisphosphate aldolase, non-muscle type (364 aa).

2 residues coordinate substrate: arginine 56 and lysine 147. The active-site Schiff-base intermediate with dihydroxyacetone-P is lysine 230.

The protein belongs to the class I fructose-bisphosphate aldolase family. As to quaternary structure, homotetramer. Expressed mainly in the liver and also in brain and other tissues, except for the heart muscle.

The catalysed reaction is beta-D-fructose 1,6-bisphosphate = D-glyceraldehyde 3-phosphate + dihydroxyacetone phosphate. Its pathway is carbohydrate degradation; glycolysis; D-glyceraldehyde 3-phosphate and glycerone phosphate from D-glucose: step 4/4. This chain is Fructose-bisphosphate aldolase, non-muscle type, found in Lethenteron camtschaticum (Japanese lamprey).